A 303-amino-acid chain; its full sequence is Nitrogenase iron protein (303 aa).

11-18 (GKGGIGKS) is a binding site for ATP. [4Fe-4S] cluster is bound at residue C112. The residue at position 115 (R115) is an ADP-ribosylarginine; by dinitrogenase reductase ADP-ribosyltransferase. C147 is a binding site for [4Fe-4S] cluster.

Belongs to the NifH/BchL/ChlL family. As to quaternary structure, homodimer. Requires [4Fe-4S] cluster as cofactor. In terms of processing, the reversible ADP-ribosylation of Arg-115 inactivates the nitrogenase reductase and regulates nitrogenase activity.

The catalysed reaction is N2 + 8 reduced [2Fe-2S]-[ferredoxin] + 16 ATP + 16 H2O = H2 + 8 oxidized [2Fe-2S]-[ferredoxin] + 2 NH4(+) + 16 ADP + 16 phosphate + 6 H(+). The key enzymatic reactions in nitrogen fixation are catalyzed by the nitrogenase complex, which has 2 components: the iron protein and the molybdenum-iron protein. In Wolinella succinogenes (strain ATCC 29543 / DSM 1740 / CCUG 13145 / JCM 31913 / LMG 7466 / NCTC 11488 / FDC 602W) (Vibrio succinogenes), this protein is Nitrogenase iron protein.